A 274-amino-acid chain; its full sequence is NAD(P)H dehydrogenase [quinone] 1 (274 aa).

FAD contacts are provided by residues H12, 18 to 19, and Q67; that span reads FN. A Phosphoserine modification is found at S82. Position 104-107 (104-107) interacts with FAD; it reads LQWF. Substrate is bound at residue 126–128; that stretch reads AYT. Residues 148–151, Y156, and R201 contribute to the FAD site; that span reads TTGG. The segment at 225-274 is important for apoenzyme conformational stability; sequence PSSLFDLNFQAGFLMKKEVQDEEKNKKFGLSVGHHLGKSIPTDNQIKARK. Residues K250 and K251 each participate in a glycyl lysine isopeptide (Lys-Gly) (interchain with G-Cter in SUMO2) cross-link.

Belongs to the NAD(P)H dehydrogenase (quinone) family. As to quaternary structure, homodimer. Interacts with PDLIM4 isoform 2; this interaction stabilizes PDLIM4 isoform 2 in response to oxidative stress and protects it from ubiquitin-independent degradation by the core 20S proteasome. Interacts with TP73 (via SAM domain); this interaction is NADH-dependent, stabilizes TP73 in response to oxidative stress and protects it from ubiquitin-independent degradation by the 20S proteasome. Interacts with TP53; this interaction is NADH-dependent, stabilizes TP53 in response to oxidative stress and protects it from ubiquitin-independent degradation by the 20S proteasome. FAD serves as cofactor.

Its subcellular location is the cytoplasm. The protein resides in the cytosol. It catalyses the reaction a quinone + NADH + H(+) = a quinol + NAD(+). The enzyme catalyses a quinone + NADPH + H(+) = a quinol + NADP(+). It carries out the reaction ubiquinone-10 + NADH + H(+) = ubiquinol-10 + NAD(+). The catalysed reaction is menadione + NADH + H(+) = menadiol + NAD(+). Its activity is regulated as follows. Inhibited by dicoumarol. In terms of biological role, flavin-containing quinone reductase that catalyzes two-electron reduction of quinones to hydroquinones using either NADH or NADPH as electron donors. In a ping-pong kinetic mechanism, the electrons are sequentially transferred from NAD(P)H to flavin cofactor and then from reduced flavin to the quinone, bypassing the formation of semiquinone and reactive oxygen species. Regulates cellular redox state primarily through quinone detoxification. Reduces components of plasma membrane redox system such as coenzyme Q and vitamin quinones, producing antioxidant hydroquinone forms. In the process may function as superoxide scavenger to prevent hydroquinone oxidation and facilitate excretion. Alternatively, can activate quinones and their derivatives by generating redox reactive hydroquinones with DNA cross-linking antitumor potential. Acts as a gatekeeper of the core 20S proteasome known to degrade proteins with unstructured regions. Upon oxidative stress, interacts with tumor suppressors TP53 and TP73 in a NADH-dependent way and inhibits their ubiquitin-independent degradation by the 20S proteasome. The polypeptide is NAD(P)H dehydrogenase [quinone] 1 (Homo sapiens (Human)).